An 830-amino-acid chain; its full sequence is Scavenger receptor class F member 1 (830 aa).

The N-terminal stretch at 1–19 (MGLGLLLPLLLLWTRGTQG) is a signal peptide. Residues 20–421 (SELDPKGQHV…CQPGSGSRDT (402 aa)) lie on the Extracellular side of the membrane. EGF-like domains follow at residues 53–87 (TIPI…AHCS), 95–130 (WGPD…ARCE), 155–191 (WSST…RRCS), and 215–249 (WGPE…ARCE). Cystine bridges form between Cys57-Cys69, Cys63-Cys75, Cys77-Cys86, Cys99-Cys111, Cys105-Cys118, Cys120-Cys129, Cys159-Cys172, Cys165-Cys179, Cys181-Cys190, Cys219-Cys230, Cys225-Cys237, and Cys239-Cys248. N-linked (GlcNAc...) asparagine glycosylation occurs at Asn289. EGF-like domains lie at 302 to 339 (FGES…PRCE) and 351 to 382 (CGST…PSCN). 6 disulfide bridges follow: Cys306–Cys319, Cys313–Cys326, Cys329–Cys338, Cys355–Cys363, Cys358–Cys370, and Cys372–Cys381. N-linked (GlcNAc...) asparagine glycosylation is found at Asn382 and Asn393. Residues 422 to 442 (ALIAGSLVPLLLLFLGLACCA) traverse the membrane as a helical segment. The Cytoplasmic segment spans residues 443–830 (CCCWAPRSDL…VVPISRPPEP (388 aa)). Disordered stretches follow at residues 516–539 (GWAT…PAYC), 581–688 (SLAR…SGPV), and 715–830 (FQKG…PPEP). 2 positions are modified to phosphoserine: Ser589 and Ser606. The segment covering 634-643 (ESTGPEEAEA) has biased composition (acidic residues). Residues 644–653 (PESFPAAASP) are compositionally biased toward low complexity.

In terms of assembly, heterophilic interaction with SREC2 via its extracellular domain. The heterophilic interaction is suppressed by the presence of ligand such as Ac-LDL. Interacts with AVIL. As to expression, endothelial cells.

It is found in the membrane. Mediates the binding and degradation of acetylated low density lipoprotein (Ac-LDL). Mediates heterophilic interactions, suggesting a function as adhesion protein. Plays a role in the regulation of neurite-like outgrowth. This Homo sapiens (Human) protein is Scavenger receptor class F member 1 (SCARF1).